The sequence spans 114 residues: Iron-sulfur cluster insertion protein ErpA (114 aa).

The iron-sulfur cluster site is built by cysteine 42, cysteine 106, and cysteine 108.

It belongs to the HesB/IscA family. Homodimer. Iron-sulfur cluster serves as cofactor.

Its function is as follows. Required for insertion of 4Fe-4S clusters for at least IspG. This chain is Iron-sulfur cluster insertion protein ErpA, found in Buchnera aphidicola subsp. Acyrthosiphon pisum (strain APS) (Acyrthosiphon pisum symbiotic bacterium).